The sequence spans 107 residues: Nucleoid-associated protein Hhal_0231 (107 aa).

Disordered stretches follow at residues 1–24 (MKGG…KAQE) and 82–107 (VQRE…KLPF). Over residues 15 to 24 (MQEDMQKAQE) the composition is skewed to basic and acidic residues.

This sequence belongs to the YbaB/EbfC family. In terms of assembly, homodimer.

Its subcellular location is the cytoplasm. It is found in the nucleoid. In terms of biological role, binds to DNA and alters its conformation. May be involved in regulation of gene expression, nucleoid organization and DNA protection. This Halorhodospira halophila (strain DSM 244 / SL1) (Ectothiorhodospira halophila (strain DSM 244 / SL1)) protein is Nucleoid-associated protein Hhal_0231.